Consider the following 366-residue polypeptide: Peptide chain release factor 1 (366 aa).

The residue at position 230 (Gln-230) is an N5-methylglutamine. Composition is skewed to basic and acidic residues over residues 283 to 293 (ARDAQEARDRA) and 315 to 328 (VTDH…KNHP). Residues 283-335 (ARDAQEARDRAAQVGSGERSEKIRTYNYPQNRVTDHRLEGDSKNHPLDSVMAG) are disordered.

The protein belongs to the prokaryotic/mitochondrial release factor family. In terms of processing, methylated by PrmC. Methylation increases the termination efficiency of RF1.

It is found in the cytoplasm. Functionally, peptide chain release factor 1 directs the termination of translation in response to the peptide chain termination codons UAG and UAA. The sequence is that of Peptide chain release factor 1 from Deinococcus deserti (strain DSM 17065 / CIP 109153 / LMG 22923 / VCD115).